A 521-amino-acid polypeptide reads, in one-letter code: GMP synthase [glutamine-hydrolyzing] (521 aa).

Residues 8-203 enclose the Glutamine amidotransferase type-1 domain; that stretch reads KILILDFGAQ…VVDVCGCQTL (196 aa). C85 (nucleophile) is an active-site residue. Residues H177 and E179 contribute to the active site. In terms of domain architecture, GMPS ATP-PPase spans 204 to 396; sequence WTAANIIDDQ…LGLPRTMVYR (193 aa). 231–237 serves as a coordination point for ATP; it reads SGGVDSS.

In terms of assembly, homodimer.

The catalysed reaction is XMP + L-glutamine + ATP + H2O = GMP + L-glutamate + AMP + diphosphate + 2 H(+). Its pathway is purine metabolism; GMP biosynthesis; GMP from XMP (L-Gln route): step 1/1. Catalyzes the synthesis of GMP from XMP. This chain is GMP synthase [glutamine-hydrolyzing], found in Stenotrophomonas maltophilia (strain K279a).